A 1290-amino-acid chain; its full sequence is Period circadian protein homolog 1 (1290 aa).

The interval 1–134 is disordered; that stretch reads MSGPLEGADG…SSEQSARART (134 aa). The interaction with BTRC stretch occupies residues 1–151; it reads MSGPLEGADG…LRELKLRLPP (151 aa). The span at 25 to 38 shows a compositional bias: pro residues; sequence VPSPGPPQHRPCPG. Composition is skewed to low complexity over residues 48–57 and 64–115; these read NSNGSSGNES and GASQ…ASSE. The span at 116–132 shows a compositional bias: polar residues; sequence QDNPSTSGCSSEQSARA. Threonine 121 carries the phosphothreonine; by CSNK1E modification. Phosphoserine; by CSNK1E is present on residues serine 122 and serine 126. Positions 138–147 match the Nuclear export signal 1 motif; it reads LMTALRELKL. 2 PAS domains span residues 208-275 and 348-414; these read ITSE…PSRL and YEAP…KILQ. The region spanning 422-465 is the PAC domain; sequence HSPIRFCARNGEYVTMDTSWAGFVHPWSRKVAFVLGRHKVRTAP. The Nuclear export signal 2 motif lies at 489 to 498; sequence LSEQIHRLLL. 2 disordered regions span residues 508–544 and 646–698; these read GLCGVGAVTSPGPLHSPGSSSDSNGGDAEGPGPPAPV and TTKR…KEPV. Low complexity-rich tracts occupy residues 517–533 and 652–662; these read SPGPLHSPGSSSDSNGG and ASSSSYTTSSA. Residues 596–815 form a required for phosphorylation by CSNK1E region; sequence ELEAGSAPVQ…GLDSSSTAPS (220 aa). Residues serine 661, serine 663, and serine 704 each carry the phosphoserine modification. Disordered stretches follow at residues 749 to 772, 805 to 874, and 938 to 977; these read GLAPGPAPSPAPSPTVAPDPAPDA, RGLD…PPAT, and ALQTPAEGPPTPASHSPSPSLPALAPSPPHRPDSPLFNSR. The span at 751 to 769 shows a compositional bias: pro residues; the sequence is APGPAPSPAPSPTVAPDPA. Residue serine 815 is modified to Phosphoserine. The short motif at 827-843 is the Nuclear localization signal element; the sequence is APPSRRHHCRSKAKRSR. A compositionally biased stretch (basic residues) spans 830-847; that stretch reads SRRHHCRSKAKRSRHHQN. The span at 860–874 shows a compositional bias: pro residues; that stretch reads SPVPPSTPWPTPPAT. Over residues 950 to 961 the composition is skewed to low complexity; sequence ASHSPSPSLPAL. 2 positions are modified to phosphoserine: serine 979 and serine 980. The Nuclear export signal 3 motif lies at 982–989; it reads LQLNLLQL. The disordered stretch occupies residues 996-1037; it reads EGAAVAGGPGSSAGPPPPSAEAAEPEARLAEVTESSNQDALS. The LXXLL signature appears at 1043-1047; it reads LELLL. The span at 1051-1062 shows a compositional bias: low complexity; sequence SRSGTGSAASGS. 2 disordered regions span residues 1051–1098 and 1207–1290; these read SRSG…SKYF and SSTQ…NCTS. A compositionally biased stretch (gly residues) spans 1063-1077; sequence LGSGLGSGSGSGSHE. Over residues 1078-1095 the composition is skewed to low complexity; it reads GGSTSASITRSSQSSHTS. Residues 1149–1290 form a CRY binding domain region; that stretch reads SRDMTSVLKQ…ALPTAGNCTS (142 aa). A compositionally biased stretch (gly residues) spans 1236–1248; sequence GEQGSSGGGSGEG.

In terms of assembly, homodimer. Component of the circadian core oscillator, which includes the CRY proteins, CLOCK or NPAS2, BMAL1 or BMAL2, CSNK1D and/or CSNK1E, TIMELESS, and the PER proteins. Interacts directly with TIMELESS, PER2, PER3, CRY1 and CRY2. Interacts with BMAL1 and CLOCK. Interacts with GPRASP1. Interacts (phosphorylated) with BTRC and FBXW11; the interactions trigger proteasomal degradation. Interacts with NONO, WDR5 and SFPQ. Interacts with USP2. Interacts with HNF4A. In terms of processing, phosphorylated on serine residues by CSNK1D, CSNK1E and probably also by CSNK1G2. Phosphorylation by CSNK1D or CSNK1E promotes nuclear location of PER proteins as well as ubiquitination and subsequent degradation. May be dephosphorylated by PP1. Post-translationally, ubiquitinated; requires phosphorylation by CSNK1E and interaction with BTRC and FBXW11. Deubiquitinated by USP2. As to expression, widely expressed. Expressed in hair follicles (at protein level). Found in heart, brain, placenta, lung, liver, skeletal muscle, pancreas, kidney, spleen, thymus, prostate, testis, ovary and small intestine. Highest level in skeletal muscle.

The protein resides in the nucleus. The protein localises to the cytoplasm. Transcriptional repressor which forms a core component of the circadian clock. The circadian clock, an internal time-keeping system, regulates various physiological processes through the generation of approximately 24 hour circadian rhythms in gene expression, which are translated into rhythms in metabolism and behavior. It is derived from the Latin roots 'circa' (about) and 'diem' (day) and acts as an important regulator of a wide array of physiological functions including metabolism, sleep, body temperature, blood pressure, endocrine, immune, cardiovascular, and renal function. Consists of two major components: the central clock, residing in the suprachiasmatic nucleus (SCN) of the brain, and the peripheral clocks that are present in nearly every tissue and organ system. Both the central and peripheral clocks can be reset by environmental cues, also known as Zeitgebers (German for 'timegivers'). The predominant Zeitgeber for the central clock is light, which is sensed by retina and signals directly to the SCN. The central clock entrains the peripheral clocks through neuronal and hormonal signals, body temperature and feeding-related cues, aligning all clocks with the external light/dark cycle. Circadian rhythms allow an organism to achieve temporal homeostasis with its environment at the molecular level by regulating gene expression to create a peak of protein expression once every 24 hours to control when a particular physiological process is most active with respect to the solar day. Transcription and translation of core clock components (CLOCK, NPAS2, BMAL1, BMAL2, PER1, PER2, PER3, CRY1 and CRY2) plays a critical role in rhythm generation, whereas delays imposed by post-translational modifications (PTMs) are important for determining the period (tau) of the rhythms (tau refers to the period of a rhythm and is the length, in time, of one complete cycle). A diurnal rhythm is synchronized with the day/night cycle, while the ultradian and infradian rhythms have a period shorter and longer than 24 hours, respectively. Disruptions in the circadian rhythms contribute to the pathology of cardiovascular diseases, cancer, metabolic syndromes and aging. A transcription/translation feedback loop (TTFL) forms the core of the molecular circadian clock mechanism. Transcription factors, CLOCK or NPAS2 and BMAL1 or BMAL2, form the positive limb of the feedback loop, act in the form of a heterodimer and activate the transcription of core clock genes and clock-controlled genes (involved in key metabolic processes), harboring E-box elements (5'-CACGTG-3') within their promoters. The core clock genes: PER1/2/3 and CRY1/2 which are transcriptional repressors form the negative limb of the feedback loop and interact with the CLOCK|NPAS2-BMAL1|BMAL2 heterodimer inhibiting its activity and thereby negatively regulating their own expression. This heterodimer also activates nuclear receptors NR1D1/2 and RORA/B/G, which form a second feedback loop and which activate and repress BMAL1 transcription, respectively. Regulates circadian target genes expression at post-transcriptional levels, but may not be required for the repression at transcriptional level. Controls PER2 protein decay. Represses CRY2 preventing its repression on CLOCK/BMAL1 target genes such as FXYD5 and SCNN1A in kidney and PPARA in liver. Besides its involvement in the maintenance of the circadian clock, has an important function in the regulation of several processes. Participates in the repression of glucocorticoid receptor NR3C1/GR-induced transcriptional activity by reducing the association of NR3C1/GR to glucocorticoid response elements (GREs) by BMAL1:CLOCK. Plays a role in the modulation of the neuroinflammatory state via the regulation of inflammatory mediators release, such as CCL2 and IL6. In spinal astrocytes, negatively regulates the MAPK14/p38 and MAPK8/JNK MAPK cascades as well as the subsequent activation of NFkappaB. Coordinately regulates the expression of multiple genes that are involved in the regulation of renal sodium reabsorption. Can act as gene expression activator in a gene and tissue specific manner, in kidney enhances WNK1 and SLC12A3 expression in collaboration with CLOCK. Modulates hair follicle cycling. Represses the CLOCK-BMAL1 induced transcription of BHLHE40/DEC1. The polypeptide is Period circadian protein homolog 1 (PER1) (Homo sapiens (Human)).